A 586-amino-acid polypeptide reads, in one-letter code: MKWVNKGTVERVKQEFKDEVKYYETKHTKGFEVSHDFLKPLLKFLKERERFLHFVDMTCIDFPEHPNRFQGVYILYNPEENERVIVKSWAKDGKLPTVEDLWPGAKWAEREAYDMFGVVFEGHENLRRMFMWEGYEHYPLRKDFPLQGIPEVELPSLTEVLHGRTDPPSHDFELVHTKLPTLEDLERTEKARLKKKAELVLNWGPLHPGTHGTIWFLFDLEGEKVVQSDVILGQLHRGMEKLAENLHYFQFIPYTDRMDYISAICNELAYVETVERLLGVEVPEKARYIRTMFAELQRINSHLLWLGTGALDLGALTVFLYAFREREKIMDIIEGNAGYRLTSCFLRIGGVHYDLAEGTLDVVKHFIKDFPNRLKEYHTLLTRNRIWLRRTKDVGVITREDVHNYGLSGPVARGSGVPYDLRKLQPYAAYDEVEFDIPVGEVGDVYDRYLVRMEEMAQSVRIIEQCVQKLEKLPKDAPYLNKEHPAVIPPKEDVFHDLESMVKSFRVVVHGEDAPPGEVYFAGENPRGELGFFIYSKGGGKPYRTRIRSGALYNLSIFPKLIQGRTIADAIALLGSLDPVVGETDR.

Residues 1-173 (MKWVNKGTVE…RTDPPSHDFE (173 aa)) form an NADH dehydrogenase I subunit C region. Positions 197 to 586 (AELVLNWGPL…LDPVVGETDR (390 aa)) are NADH dehydrogenase I subunit D.

The protein in the N-terminal section; belongs to the complex I 30 kDa subunit family. It in the C-terminal section; belongs to the complex I 49 kDa subunit family. As to quaternary structure, NDH-1 is composed of 13 different subunits. Subunits NuoB, CD, E, F, and G constitute the peripheral sector of the complex.

Its subcellular location is the cell inner membrane. The catalysed reaction is a quinone + NADH + 5 H(+)(in) = a quinol + NAD(+) + 4 H(+)(out). Functionally, NDH-1 shuttles electrons from NADH, via FMN and iron-sulfur (Fe-S) centers, to quinones in the respiratory chain. The immediate electron acceptor for the enzyme in this species is believed to be ubiquinone. Couples the redox reaction to proton translocation (for every two electrons transferred, four hydrogen ions are translocated across the cytoplasmic membrane), and thus conserves the redox energy in a proton gradient. The sequence is that of NADH-quinone oxidoreductase subunit C/D 2 (nuoC2) from Aquifex aeolicus (strain VF5).